A 303-amino-acid chain; its full sequence is Glycine--tRNA ligase alpha subunit (303 aa).

It belongs to the class-II aminoacyl-tRNA synthetase family. In terms of assembly, tetramer of two alpha and two beta subunits.

It localises to the cytoplasm. The catalysed reaction is tRNA(Gly) + glycine + ATP = glycyl-tRNA(Gly) + AMP + diphosphate. This is Glycine--tRNA ligase alpha subunit from Bordetella pertussis (strain Tohama I / ATCC BAA-589 / NCTC 13251).